The chain runs to 313 residues: Acetaldehyde dehydrogenase 3 (313 aa).

Position 13-16 (serine 13–isoleucine 16) interacts with NAD(+). Residue cysteine 133 is the Acyl-thioester intermediate of the active site. Residues serine 164 to asparagine 172 and asparagine 291 each bind NAD(+).

This sequence belongs to the acetaldehyde dehydrogenase family.

It carries out the reaction acetaldehyde + NAD(+) + CoA = acetyl-CoA + NADH + H(+). The protein is Acetaldehyde dehydrogenase 3 of Paraburkholderia xenovorans (strain LB400).